Reading from the N-terminus, the 342-residue chain is 3-isopropylmalate dehydrogenase (342 aa).

Substrate-binding residues include Arg87, Arg97, Arg121, and Asp212. Mg(2+)-binding residues include Asp212, Asp236, and Asp240. 272–284 (GSAPDIAGRQLAD) contributes to the NAD(+) binding site. The segment covering 319–328 (RAAAGAAQPS) has biased composition (low complexity). Residues 319-342 (RAAAGAAQPSTRERGEDLAARAAG) are disordered. Basic and acidic residues predominate over residues 329 to 342 (TRERGEDLAARAAG).

This sequence belongs to the isocitrate and isopropylmalate dehydrogenases family. LeuB type 2 subfamily. In terms of assembly, homodimer. Requires Mg(2+) as cofactor. The cofactor is Mn(2+).

It is found in the cytoplasm. It catalyses the reaction (2R,3S)-3-isopropylmalate + NAD(+) = 4-methyl-2-oxopentanoate + CO2 + NADH. Its pathway is amino-acid biosynthesis; L-leucine biosynthesis; L-leucine from 3-methyl-2-oxobutanoate: step 3/4. Catalyzes the oxidation of 3-carboxy-2-hydroxy-4-methylpentanoate (3-isopropylmalate) to 3-carboxy-4-methyl-2-oxopentanoate. The product decarboxylates to 4-methyl-2 oxopentanoate. In Frankia casuarinae (strain DSM 45818 / CECT 9043 / HFP020203 / CcI3), this protein is 3-isopropylmalate dehydrogenase.